The primary structure comprises 204 residues: MMVPDANTLNVSRETFERLKIFADLVHKWNPRINLVSKRSLEDLWTRHIIDSIQVFRNAPKGDLWVDLGSGGGFPGLICAILAAEEKPETQFICVESDQRKSAFLRSAARECGIACQVISERIEHLDPLDADILSARALTDLTGLLGFAERHLKIGGTALFPKGAAWKKELQDAAKQWNFSYDAVTSLTEPQAVLLKITGVTRV.

S-adenosyl-L-methionine-binding positions include Gly-69, Phe-74, 123–124 (IE), and Arg-137.

Belongs to the methyltransferase superfamily. RNA methyltransferase RsmG family.

The protein localises to the cytoplasm. It catalyses the reaction guanosine(527) in 16S rRNA + S-adenosyl-L-methionine = N(7)-methylguanosine(527) in 16S rRNA + S-adenosyl-L-homocysteine. Its function is as follows. Specifically methylates the N7 position of guanine in position 527 of 16S rRNA. The sequence is that of Ribosomal RNA small subunit methyltransferase G from Ruegeria pomeroyi (strain ATCC 700808 / DSM 15171 / DSS-3) (Silicibacter pomeroyi).